Reading from the N-terminus, the 782-residue chain is Anoctamin-9 (782 aa).

The Cytoplasmic portion of the chain corresponds to Met-1–Thr-198. Residues Tyr-199–Phe-219 form a helical membrane-spanning segment. At Glu-220 to Asn-264 the chain is on the extracellular side. Ser-250 carries the phosphoserine; by PKA modification. A helical transmembrane segment spans residues Asp-265–Trp-285. Residues Lys-286–Thr-331 lie on the Cytoplasmic side of the membrane. The helical transmembrane segment at Val-332–Val-352 threads the bilayer. Over Val-353 to Gln-373 the chain is Extracellular. Residues Val-374 to Thr-394 traverse the membrane as a helical segment. Residues Lys-395–Arg-423 are Cytoplasmic-facing. Residues Phe-424 to Gly-444 traverse the membrane as a helical segment. At Arg-445 to Thr-552 the chain is on the extracellular side. Residues Ile-553 to Ile-573 traverse the membrane as a helical segment. Residues Arg-574 to Thr-604 lie on the Cytoplasmic side of the membrane. The helical transmembrane segment at Ile-605 to Pro-625 threads the bilayer. Topologically, residues Arg-626–Leu-703 are extracellular. N-linked (GlcNAc...) asparagine glycosylation is found at Asn-641, Asn-652, Asn-674, and Asn-690. A helical transmembrane segment spans residues Ala-704–Val-724. Topologically, residues Pro-725–Val-782 are cytoplasmic. Residues Gly-756 to Val-782 form a disordered region.

This sequence belongs to the anoctamin family. Phosphorylated on serine residues by cAMP-dependent protein kinase A (PKA) which is essential for activation of its cation channel activity. In terms of tissue distribution, expressed in the kidney. Expressed in the olfactory epithelium.

The protein localises to the cell membrane. It localises to the endoplasmic reticulum. It catalyses the reaction a 1,2-diacyl-sn-glycero-3-phospho-L-serine(in) = a 1,2-diacyl-sn-glycero-3-phospho-L-serine(out). It carries out the reaction a beta-D-galactosyl-(1&lt;-&gt;1')-N-acylsphing-4-enine(out) = a beta-D-galactosyl-(1&lt;-&gt;1')-N-acylsphing-4-enine(in). The catalysed reaction is a 1,2-diacyl-sn-glycero-3-phosphocholine(in) = a 1,2-diacyl-sn-glycero-3-phosphocholine(out). The enzyme catalyses Ca(2+)(in) = Ca(2+)(out). It catalyses the reaction Na(+)(in) = Na(+)(out). It carries out the reaction K(+)(in) = K(+)(out). With respect to regulation, cation channel activity is activated via phosphorylation on serine residues by cAMP-dependent protein kinase A (PKA). Its function is as follows. PKA-activated nonselective cation channel. Discriminates poorly among cations but is more permeable to Ca(2+) ions than to monovalent cations. Acts as a calcium-activated calcium permeable channel which may operate as a endoplasmic reticulum (ER) Ca(2+)-leak channel, reducing the loading of the ER Ca(2+) store. Regulates intracellular Ca2+ signals, ion channel activity, and cytokine release in the renal tissue. Plays an important role in olfaction, amplifying cAMP-evoked cyclic nucleotide-gated (CNG) channel currents in the olfactory sensory neurons. Has calcium-dependent phospholipid scramblase activity; scrambles phosphatidylserine, phosphatidylcholine and galactosylceramide. Does not exhibit calcium-activated chloride channel (CaCC) activity. Can inhibit the activity of ANO1. The sequence is that of Anoctamin-9 (ANO9) from Homo sapiens (Human).